The primary structure comprises 443 residues: MIHDPAQLEKERPDRLRVLWLSTLAFTLMFAAWLMFGVLGVPIRKEFGLSDVQLSWISALAILNGSLWRLLAGILADRYGGRLVFTLMLFFTAIPAYLVSRAGSYEELLLYAFLVGFAGNSFSVGIAWNSAWFPKDQQGFALGVFGAGNVGASVTKFIGPALIASVPASGYLGGLIPGGWRFIPFLYAVLLVLMGFVLWFGTPRKDKRPGQGRPFLDMLKPLRYVRVWRFSLYYVVVFGAYVALSAWLPKYYVDVFGLPLHEAALLTALFIFPASLLRPVGGYLSDRFGARRIMYWTFGIILLASGVLMMPEGHIVLYTKQGAKEVMQFTMGVELFTLLVFLIGVGMGIGKAAVYKHIPTYFPQDVGAVGGLVGMLGALGGFFLPPLFAYAQAWTGLPQMTFFVLFLLAAISFLWMHLTVLKLLQQEAQHLKNDFELKGDRPC.

The next 12 helical transmembrane spans lie at 23-43 (TLAFTLMFAAWLMFGVLGVPI), 56-76 (WISALAILNGSLWRLLAGILA), 79-99 (YGGRLVFTLMLFFTAIPAYLV), 108-128 (LLLYAFLVGFAGNSFSVGIAW), 142-164 (LGVFGAGNVGASVTKFIGPALIA), 182-202 (FIPFLYAVLLVLMGFVLWFGT), 230-250 (FSLYYVVVFGAYVALSAWLPK), 255-275 (VFGLPLHEAALLTALFIFPAS), 298-318 (FGIILLASGVLMMPEGHIVLY), 329-349 (FTMGVELFTLLVFLIGVGMGI), 368-388 (AVGGLVGMLGALGGFFLPPLF), and 401-421 (TFFVLFLLAAISFLWMHLTVL).

It belongs to the major facilitator superfamily. Nitrate/nitrite porter (TC 2.A.1.8) family.

It localises to the cell membrane. The enzyme catalyses nitrate(in) + nitrite(out) = nitrate(out) + nitrite(in). Probable nitrate/nitrite antiporter that may be involved in nitrate import and nitrite export during anaerobic growth. The protein is Probable nitrate/nitrite antiporter NarK1 of Thermus thermophilus.